The chain runs to 630 residues: MDLTQIQNPSFLKEMSISELEGLSEDIRKFLIEELSQTGGHIAPNLGVVELTIALHKLFDSPKDKFLWDVGHQSYVHKILTGRAKEFGTLRQYQGLCGFPKRCESEHDVWETGHSSTSLSAAMGMALARDLKKTKEYVIPIIGDGALTGGMALEALNHIGHEKTDMIVILNDNEMSIAPNVGALHNVLGRLRTAGKYHWVKDELEYILKKIPAVGGKVAATAEKIKDSLKYLLVSGVFFEELGFTYLGPVDGHDYEKLFETLQYAKKTKGPVLVHVITKKGKGYKPAESDVIGTWHGTGPYKIESGDFVKPKEVAPAWSAVVSETVLKLARTDERIVAITPAMPVGSKLEKFQKEFPDRMIDVGIAEQHATTMAAGMATQGMKPFLAIYSTFLQRAYDQVVHDICRQNLNVFIGIDRSGLVGADGETHQGVFDISFLRHLPNMVLMMPKDENEGQHLVYTAMQYEDGPIALRYARGNGLGVHMDEELKAIPIGSWETLKEGTQAAILTFGTTIPMAMEAAERLEKAGVSVKVVNARFIKPMDEAYLHDLLGKNIPILTIEEACLIGGFGTGVVEFASENGYHSALVERMGIPDRFIEHGSVTKLLEEIGLTTDAVVDRIHTMIPSKQKRA.

Thiamine diphosphate contacts are provided by residues His-72 and 113-115 (GHS). Asp-144 contacts Mg(2+). Thiamine diphosphate contacts are provided by residues 145–146 (GA), Asn-173, Tyr-284, and Glu-367. Asn-173 contacts Mg(2+).

This sequence belongs to the transketolase family. DXPS subfamily. Homodimer. Mg(2+) is required as a cofactor. It depends on thiamine diphosphate as a cofactor.

It carries out the reaction D-glyceraldehyde 3-phosphate + pyruvate + H(+) = 1-deoxy-D-xylulose 5-phosphate + CO2. It participates in metabolic intermediate biosynthesis; 1-deoxy-D-xylulose 5-phosphate biosynthesis; 1-deoxy-D-xylulose 5-phosphate from D-glyceraldehyde 3-phosphate and pyruvate: step 1/1. Its function is as follows. Catalyzes the acyloin condensation reaction between C atoms 2 and 3 of pyruvate and glyceraldehyde 3-phosphate to yield 1-deoxy-D-xylulose-5-phosphate (DXP). The chain is 1-deoxy-D-xylulose-5-phosphate synthase from Bacillus cereus (strain AH187).